The primary structure comprises 347 residues: O-methyltransferase aunE (347 aa).

Residue Trp166 coordinates S-adenosyl-L-methionine. His265 (proton acceptor) is an active-site residue.

The protein belongs to the class I-like SAM-binding methyltransferase superfamily. Cation-independent O-methyltransferase family.

The protein operates within secondary metabolite biosynthesis. O-methyltransferase; part of the gene cluster that mediates the biosynthesis of aurasperone B, a dimeric gamma-naphthopyrone. The first step in the biosynthesis of aurasperone B is the production of gamma-naphthopyrone precursor YWA1 by the non-reducing polyketide synthase albA, via condensation of one acetyl-CoA starter unit with 6 malonyl-CoA units. YWA1 is then methylated by aunE at position C-6 to yield foncesin which is further methylated at position C-8 by aunD to produce fonsecin B. A key enzyme in the biosynthetic pathway is the cytochrome P450 monooxygenase aunB which catalyzes the oxidative dimerization of fonsecin B to aurasperone B. AunB also catalyzes the oxidative dimerization of rubrofusarin B into aurasperone A. The sequence is that of O-methyltransferase aunE from Aspergillus niger (strain ATCC 1015 / CBS 113.46 / FGSC A1144 / LSHB Ac4 / NCTC 3858a / NRRL 328 / USDA 3528.7).